We begin with the raw amino-acid sequence, 496 residues long: Aspartyl/glutamyl-tRNA(Asn/Gln) amidotransferase subunit B (496 aa).

This sequence belongs to the GatB/GatE family. GatB subfamily. As to quaternary structure, heterotrimer of A, B and C subunits.

It catalyses the reaction L-glutamyl-tRNA(Gln) + L-glutamine + ATP + H2O = L-glutaminyl-tRNA(Gln) + L-glutamate + ADP + phosphate + H(+). It carries out the reaction L-aspartyl-tRNA(Asn) + L-glutamine + ATP + H2O = L-asparaginyl-tRNA(Asn) + L-glutamate + ADP + phosphate + 2 H(+). Functionally, allows the formation of correctly charged Asn-tRNA(Asn) or Gln-tRNA(Gln) through the transamidation of misacylated Asp-tRNA(Asn) or Glu-tRNA(Gln) in organisms which lack either or both of asparaginyl-tRNA or glutaminyl-tRNA synthetases. The reaction takes place in the presence of glutamine and ATP through an activated phospho-Asp-tRNA(Asn) or phospho-Glu-tRNA(Gln). The protein is Aspartyl/glutamyl-tRNA(Asn/Gln) amidotransferase subunit B of Xanthobacter autotrophicus (strain ATCC BAA-1158 / Py2).